Reading from the N-terminus, the 241-residue chain is MADS-box transcription factor 57 (241 aa).

One can recognise an MADS-box domain in the interval 1-61 (MGRGKIVIRR…GRLYEFSSTN (61 aa)). The 94-residue stretch at 85–178 (IKIWQREAAS…LNVMSQQKLE (94 aa)) folds into the K-box domain. The tract at residues 216 to 241 (LELSQSQQREGECSKTAAPELGLHLP) is disordered.

As to quaternary structure, interacts with TB1. In terms of tissue distribution, expressed in seedling roots and shoots. Highly expressed in young leaves.

It is found in the nucleus. In terms of biological role, transcriptional factor that targets the CArG motif 5'-C(A/T)TTAAAAAG-3' in the promoter of D14. Directly suppresses D14 expression to control the outgrowth of axillary buds. The protein is MADS-box transcription factor 57 of Oryza sativa subsp. japonica (Rice).